A 90-amino-acid polypeptide reads, in one-letter code: Protein S100-A6 (90 aa).

EF-hand domains lie at 12–47 (LIGI…IGSK) and 48–83 (LQDA…LAMI). 2 residues coordinate Ca(2+): Thr28 and Glu33. Lys40 bears the N6-acetyllysine mark. Ser46 is subject to Phosphoserine. Lys47 carries the N6-acetyllysine; alternate modification. Lys47 carries the N6-succinyllysine; alternate modification. Positions 61, 63, 65, 67, and 72 each coordinate Ca(2+).

Belongs to the S-100 family. Homodimer; head to tail assembly of 2 subunits. Interacts with CACYBP in a calcium-dependent manner. Interacts with ANXA2 and ANXA11 (via N-terminus). Interacts with SUGT1. Interacts with TP53; has higher affinity for TP53 that is phosphorylated on its N-terminal domain, and lower affinity for TP53 that is phosphorylated on its C-terminal domain. Interacts with tropomyosin. Interacts with FKBP4. Interacts with PPP5C (via TPR repeats); the interaction is calcium-dependent and modulates PPP5C activity. Interacts with TPPP; this interaction inhibits TPPP dimerization.

It is found in the nucleus envelope. It localises to the cytoplasm. The protein resides in the cell membrane. Its function is as follows. May function as calcium sensor and modulator, contributing to cellular calcium signaling. May function by interacting with other proteins, such as TPR-containing proteins, and indirectly play a role in many physiological processes such as the reorganization of the actin cytoskeleton and in cell motility. Binds 2 calcium ions. Calcium binding is cooperative. This chain is Protein S100-A6 (S100A6), found in Oryctolagus cuniculus (Rabbit).